We begin with the raw amino-acid sequence, 476 residues long: ATP synthase subunit beta (476 aa).

158–165 (GGAGVGKT) is an ATP binding site.

This sequence belongs to the ATPase alpha/beta chains family. In terms of assembly, F-type ATPases have 2 components, CF(1) - the catalytic core - and CF(0) - the membrane proton channel. CF(1) has five subunits: alpha(3), beta(3), gamma(1), delta(1), epsilon(1). CF(0) has three main subunits: a(1), b(2) and c(9-12). The alpha and beta chains form an alternating ring which encloses part of the gamma chain. CF(1) is attached to CF(0) by a central stalk formed by the gamma and epsilon chains, while a peripheral stalk is formed by the delta and b chains.

The protein resides in the cell inner membrane. It catalyses the reaction ATP + H2O + 4 H(+)(in) = ADP + phosphate + 5 H(+)(out). Functionally, produces ATP from ADP in the presence of a proton gradient across the membrane. The catalytic sites are hosted primarily by the beta subunits. In Paracidovorax citrulli (strain AAC00-1) (Acidovorax citrulli), this protein is ATP synthase subunit beta.